Here is a 472-residue protein sequence, read N- to C-terminus: Spliceosome-associated protein CWC27 homolog (472 aa).

Ser2 is subject to N-acetylserine. In terms of domain architecture, PPIase cyclophilin-type spans 11–166; that stretch reads TNGKVLLKTT…NPHKIKSCEV (156 aa). N-linked (GlcNAc...) asparagine glycosylation is found at Asn109 and Asn201. A coiled-coil region spans residues 206–230; the sequence is SFGEEAEEEEEEVNRVSQSMKGKSK. Disordered regions lie at residues 206–386 and 398–472; these read SFGE…DQTL and QAIA…KERR. Residues 231–241 are compositionally biased toward basic and acidic residues; it reads SSHDLLKDDPH. Positions 257–268 are enriched in acidic residues; the sequence is DLVDDGEDESAE. Basic and acidic residues-rich tracts occupy residues 269–286, 304–347, and 359–371; these read HDEY…ERIA, EVEK…KRSE, and EYRR…EALR. The stretch at 306 to 377 forms a coiled coil; it reads EKKSVSRSEE…EALRKQQSKK (72 aa). Position 346 is a phosphoserine (Ser346). Acidic residues predominate over residues 404–418; the sequence is PENDIPETEVEDDEG. Composition is skewed to basic and acidic residues over residues 425 to 437 and 457 to 472; these read QFED…KDAS and RREE…KERR.

This sequence belongs to the cyclophilin-type PPIase family. As to quaternary structure, part of the activated spliceosome B/catalytic step 1 spliceosome, one of the forms of the spliceosome which has a well-formed active site but still cannot catalyze the branching reaction and is composed at least of 52 proteins, the U2, U5 and U6 snRNAs and the pre-mRNA. Recruited during early steps of activated spliceosome B maturation, it is probably one of the first proteins released from this complex as he matures to the spliceosome C complex. Component of the minor spliceosome, which splices U12-type introns.

It is found in the nucleus. Functionally, as part of the spliceosome, plays a role in pre-mRNA splicing. Probable inactive PPIase with no peptidyl-prolyl cis-trans isomerase activity. As a component of the minor spliceosome, involved in the splicing of U12-type introns in pre-mRNAs. The chain is Spliceosome-associated protein CWC27 homolog from Homo sapiens (Human).